The following is a 187-amino-acid chain: Acireductone dioxygenase 4 (187 aa).

A2 carries the N-acetylalanine modification. H89, H91, E95, and H134 together coordinate Fe(2+). Positions 89, 91, 95, and 134 each coordinate Ni(2+).

This sequence belongs to the acireductone dioxygenase (ARD) family. Fe(2+) is required as a cofactor. Ni(2+) serves as cofactor.

The protein localises to the cytoplasm. Its subcellular location is the nucleus. The catalysed reaction is 1,2-dihydroxy-5-(methylsulfanyl)pent-1-en-3-one + O2 = 4-methylsulfanyl-2-oxobutanoate + formate + 2 H(+). It catalyses the reaction 1,2-dihydroxy-5-(methylsulfanyl)pent-1-en-3-one + O2 = 3-(methylsulfanyl)propanoate + CO + formate + 2 H(+). The protein operates within amino-acid biosynthesis; L-methionine biosynthesis via salvage pathway; L-methionine from S-methyl-5-thio-alpha-D-ribose 1-phosphate: step 5/6. Functionally, catalyzes 2 different reactions between oxygen and the acireductone 1,2-dihydroxy-3-keto-5-methylthiopentene (DHK-MTPene) depending upon the metal bound in the active site. Fe-containing acireductone dioxygenase (Fe-ARD) produces formate and 2-keto-4-methylthiobutyrate (KMTB), the alpha-ketoacid precursor of methionine in the methionine recycle pathway. Ni-containing acireductone dioxygenase (Ni-ARD) produces methylthiopropionate, carbon monoxide and formate, and does not lie on the methionine recycle pathway. The chain is Acireductone dioxygenase 4 (ARD4) from Arabidopsis thaliana (Mouse-ear cress).